We begin with the raw amino-acid sequence, 907 residues long: Isoleucine--tRNA ligase (907 aa).

The 'HIGH' region signature appears at 57-67; sequence PFANGKAHMGS. Residue E549 participates in L-isoleucyl-5'-AMP binding. The 'KMSKS' region signature appears at 590–594; the sequence is KLSKS. Position 593 (K593) interacts with ATP. The Zn(2+) site is built by C867, C870, C889, and C892.

Belongs to the class-I aminoacyl-tRNA synthetase family. IleS type 1 subfamily. Monomer. Zn(2+) serves as cofactor.

It localises to the cytoplasm. It carries out the reaction tRNA(Ile) + L-isoleucine + ATP = L-isoleucyl-tRNA(Ile) + AMP + diphosphate. Catalyzes the attachment of isoleucine to tRNA(Ile). As IleRS can inadvertently accommodate and process structurally similar amino acids such as valine, to avoid such errors it has two additional distinct tRNA(Ile)-dependent editing activities. One activity is designated as 'pretransfer' editing and involves the hydrolysis of activated Val-AMP. The other activity is designated 'posttransfer' editing and involves deacylation of mischarged Val-tRNA(Ile). In Methylacidiphilum infernorum (isolate V4) (Methylokorus infernorum (strain V4)), this protein is Isoleucine--tRNA ligase.